We begin with the raw amino-acid sequence, 518 residues long: Histone deacetylase 1 (518 aa).

Residues 22 to 333 (RRVCYFYDAE…WCYETGVALG (312 aa)) are histone deacetylase. His153 functions as the Proton donor/acceptor in the catalytic mechanism. Zn(2+)-binding residues include Asp188, His190, and Asp276. A disordered region spans residues 387–518 (HAPSVQFQER…QDQPSVHQKT (132 aa)). Positions 401 to 412 (ELPEQDEDQEDP) are enriched in acidic residues. Residues 413–435 (DERHHADSDVEMDDVKPLDDSGR) are compositionally biased toward basic and acidic residues. The segment covering 503–518 (DNSNKLQDQPSVHQKT) has biased composition (polar residues).

The protein belongs to the histone deacetylase family. HD Type 1 subfamily. In terms of assembly, interacts with TPR3. Requires Zn(2+) as cofactor. As to expression, expressed in roots and leaves.

The protein localises to the nucleus. The catalysed reaction is N(6)-acetyl-L-lysyl-[histone] + H2O = L-lysyl-[histone] + acetate. In terms of biological role, responsible for the deacetylation of lysine residues on the N-terminal part of the core histones (H2A, H2B, H3 and H4). Histone deacetylation gives a tag for epigenetic repression and plays an important role in transcriptional regulation, cell cycle progression and developmental events. Histone deacetylases act via the formation of large multiprotein complexes. Negatively regulates the expression of the NAC48/NAC6 gene that controls root growth in seedlings. Epigenetically represses the expression of NAC48/NAC6 by deacetylating 'Lys-9' (H3K9ac), 'Lys-14' (H3K14ac) and 'Lys-18' (H3K18ac) of histone H3, and 'Lys-5' (H4K5ac), 'Lys-12' (H4K12ac) and 'Lys-16' (H4K16ac) of histone H4. Functions in the regulation of gene expression in the whole genome. Acts as a chromatin remodeling regulator to promote the formation of a repressive chromatin state. Functions with MODD via its interaction with TPR3, to down-regulates the histone acetylation level at BZIP46 target genes. BZIP46 is a positive regulator of abscisic acid (ABA) signaling and drought stress tolerance. This is Histone deacetylase 1 from Oryza sativa subsp. japonica (Rice).